The primary structure comprises 166 residues: Interferon gamma (166 aa).

Residues 1 to 23 (MNYTSYILAFQLCVILGSSGCYC) form the signal peptide. Glutamine 24 carries the pyrrolidone carboxylic acid modification. Asparagine 39 and asparagine 106 each carry an N-linked (GlcNAc...) asparagine glycan. The tract at residues 147–166 (SNLRKRKRRQNQIQGRRASK) is disordered.

This sequence belongs to the type II (or gamma) interferon family. In terms of assembly, homodimer. Interacts with IFNGR1 (via extracellular domain); this interaction promotes IFNGR1 dimerization. As to expression, released primarily from activated T lymphocytes.

The protein resides in the secreted. In terms of biological role, type II interferon produced by immune cells such as T-cells and NK cells that plays crucial roles in antimicrobial, antiviral, and antitumor responses by activating effector immune cells and enhancing antigen presentation. Primarily signals through the JAK-STAT pathway after interaction with its receptor IFNGR1 to affect gene regulation. Upon IFNG binding, IFNGR1 intracellular domain opens out to allow association of downstream signaling components JAK2, JAK1 and STAT1, leading to STAT1 activation, nuclear translocation and transcription of IFNG-regulated genes. Many of the induced genes are transcription factors such as IRF1 that are able to further drive regulation of a next wave of transcription. Plays a role in class I antigen presentation pathway by inducing a replacement of catalytic proteasome subunits with immunoproteasome subunits. In turn, increases the quantity, quality, and repertoire of peptides for class I MHC loading. Increases the efficiency of peptide generation also by inducing the expression of activator PA28 that associates with the proteasome and alters its proteolytic cleavage preference. Up-regulates as well MHC II complexes on the cell surface by promoting expression of several key molecules such as cathepsins B/CTSB, H/CTSH, and L/CTSL. Participates in the regulation of hematopoietic stem cells during development and under homeostatic conditions by affecting their development, quiescence, and differentiation. This Lama glama (Llama) protein is Interferon gamma (IFNG).